A 354-amino-acid polypeptide reads, in one-letter code: Phospho-N-acetylmuramoyl-pentapeptide-transferase (354 aa).

10 helical membrane-spanning segments follow: residues 27-47 (ATLL…INML), 73-93 (TMGG…WMDV), 97-117 (LVWA…LDDY), 138-158 (FVVA…YVPV), 162-182 (LYVP…VGAG), 193-213 (GLAI…AYLA), 230-250 (AGEL…FLWF), 256-276 (AVFM…VIAV), 282-302 (IVLA…IVQV), and 331-351 (TVVI…LATL).

Belongs to the glycosyltransferase 4 family. MraY subfamily. It depends on Mg(2+) as a cofactor.

The protein resides in the cell inner membrane. It carries out the reaction UDP-N-acetyl-alpha-D-muramoyl-L-alanyl-gamma-D-glutamyl-meso-2,6-diaminopimeloyl-D-alanyl-D-alanine + di-trans,octa-cis-undecaprenyl phosphate = di-trans,octa-cis-undecaprenyl diphospho-N-acetyl-alpha-D-muramoyl-L-alanyl-D-glutamyl-meso-2,6-diaminopimeloyl-D-alanyl-D-alanine + UMP. It participates in cell wall biogenesis; peptidoglycan biosynthesis. Functionally, catalyzes the initial step of the lipid cycle reactions in the biosynthesis of the cell wall peptidoglycan: transfers peptidoglycan precursor phospho-MurNAc-pentapeptide from UDP-MurNAc-pentapeptide onto the lipid carrier undecaprenyl phosphate, yielding undecaprenyl-pyrophosphoryl-MurNAc-pentapeptide, known as lipid I. This chain is Phospho-N-acetylmuramoyl-pentapeptide-transferase, found in Novosphingobium aromaticivorans (strain ATCC 700278 / DSM 12444 / CCUG 56034 / CIP 105152 / NBRC 16084 / F199).